The sequence spans 455 residues: Putative RNA polymerase II subunit B1 CTD phosphatase rpap-2 (455 aa).

The segment at 36–121 (EHLPHLHCLG…LDEHPLWITG (86 aa)) adopts an RTR1-type zinc-finger fold. Zn(2+) contacts are provided by cysteine 59, cysteine 64, cysteine 97, and cysteine 101.

It belongs to the RPAP2 family.

It localises to the nucleus. The enzyme catalyses O-phospho-L-seryl-[protein] + H2O = L-seryl-[protein] + phosphate. It carries out the reaction O-phospho-L-threonyl-[protein] + H2O = L-threonyl-[protein] + phosphate. Its function is as follows. Putative RNA polymerase II subunit B1 C-terminal domain (CTD) phosphatase involved in RNA polymerase II transcription regulation. The chain is Putative RNA polymerase II subunit B1 CTD phosphatase rpap-2 from Caenorhabditis elegans.